The primary structure comprises 128 residues: MGIQGGSVLFGLLLILAVFCHSGHSLQCYSCPYSTARCTTTTNCTSNLDSCLIAKAGLRVYYRCWKFEDCTFRQLSNQLSENELKYHCCRENLCNFNGILENGGTTLSKKTVLLLVTPFLAAAWSLHP.

The signal sequence occupies residues 1 to 25 (MGIQGGSVLFGLLLILAVFCHSGHS). The UPAR/Ly6 domain occupies 26–108 (LQCYSCPYST…ILENGGTTLS (83 aa)). Disulfide bonds link Cys28–Cys51, Cys31–Cys38, Cys44–Cys64, Cys70–Cys88, and Cys89–Cys94. Asn43 carries an N-linked (GlcNAc...) asparagine glycan. A lipid anchor (GPI-anchor amidated asparagine) is attached at Asn102. Residues 103 to 128 (GGTTLSKKTVLLLVTPFLAAAWSLHP) constitute a propeptide, removed in mature form.

In terms of assembly, interacts with T-cell surface antigen CD2. N- and O-glycosylated.

The protein resides in the cell membrane. The protein localises to the secreted. Functionally, potent inhibitor of the complement membrane attack complex (MAC) action, which protects self-cells from damage during complement activation. Acts by binding to the beta-haipins of C8 (C8A and C8B) components of the assembling MAC, forming an intermolecular beta-sheet that prevents incorporation of the multiple copies of C9 required for complete formation of the osmolytic pore. The protein is CD59 glycoprotein of Callithrix sp. (Marmoset).